A 195-amino-acid polypeptide reads, in one-letter code: Shikimate kinase (195 aa).

Residue 26–31 (GSGKST) coordinates ATP. A Mg(2+)-binding site is contributed by Ser30. Asp48, Arg72, and Gly94 together coordinate substrate. Residue Arg132 participates in ATP binding. Arg151 contacts substrate.

This sequence belongs to the shikimate kinase family. Monomer. Mg(2+) is required as a cofactor.

It is found in the cytoplasm. The enzyme catalyses shikimate + ATP = 3-phosphoshikimate + ADP + H(+). It functions in the pathway metabolic intermediate biosynthesis; chorismate biosynthesis; chorismate from D-erythrose 4-phosphate and phosphoenolpyruvate: step 5/7. Its function is as follows. Catalyzes the specific phosphorylation of the 3-hydroxyl group of shikimic acid using ATP as a cosubstrate. The protein is Shikimate kinase of Synechococcus sp. (strain RCC307).